Reading from the N-terminus, the 304-residue chain is Sulfate adenylyltransferase subunit 2 1 (304 aa).

This sequence belongs to the PAPS reductase family. CysD subfamily. In terms of assembly, heterodimer composed of CysD, the smaller subunit, and CysN.

It carries out the reaction sulfate + ATP + H(+) = adenosine 5'-phosphosulfate + diphosphate. It functions in the pathway sulfur metabolism; hydrogen sulfide biosynthesis; sulfite from sulfate: step 1/3. Functionally, with CysN forms the ATP sulfurylase (ATPS) that catalyzes the adenylation of sulfate producing adenosine 5'-phosphosulfate (APS) and diphosphate, the first enzymatic step in sulfur assimilation pathway. APS synthesis involves the formation of a high-energy phosphoric-sulfuric acid anhydride bond driven by GTP hydrolysis by CysN coupled to ATP hydrolysis by CysD. This Marinobacter nauticus (strain ATCC 700491 / DSM 11845 / VT8) (Marinobacter aquaeolei) protein is Sulfate adenylyltransferase subunit 2 1.